The chain runs to 972 residues: Multiple C2 domain and transmembrane region protein 8 (972 aa).

In terms of domain architecture, C2 1 spans 1 to 107; that stretch reads MMSNLKLGVE…PYSEAVGLPY (107 aa). The segment at 142-203 is disordered; it reads PNLISTKKIP…MMESSLYQAP (62 aa). Over residues 150–159 the composition is skewed to basic residues; the sequence is IPSKSRHKFH. A compositionally biased stretch (polar residues) spans 161-173; it reads IPTNESNHSPRGN. The segment covering 179-194 has biased composition (pro residues); the sequence is PQPPPPQSQTALPPPM. 3 C2 domains span residues 232–352, 384–507, and 543–669; these read GGGK…PEWY, ALNA…NRWF, and YSSD…SHSY. Aspartate 265, aspartate 271, aspartate 318, aspartate 320, and aspartate 325 together coordinate Ca(2+). Helical transmembrane passes span 803-823 and 924-944; these read IIFL…SLCL and TVVL…LYIM.

The protein belongs to the MCTP family. The cofactor is Ca(2+). In terms of tissue distribution, expressed in root hairs.

It is found in the membrane. It localises to the vesicle. Functionally, may function as a signaling molecule by regulating the trafficking of other regulators. The sequence is that of Multiple C2 domain and transmembrane region protein 8 from Arabidopsis thaliana (Mouse-ear cress).